The chain runs to 248 residues: Probable transcriptional regulatory protein Acid345_2125 (248 aa).

Belongs to the TACO1 family.

It localises to the cytoplasm. The sequence is that of Probable transcriptional regulatory protein Acid345_2125 from Koribacter versatilis (strain Ellin345).